The following is a 393-amino-acid chain: Methylthioribose-1-phosphate isomerase (393 aa).

Aspartate 265 acts as the Proton donor in catalysis.

This sequence belongs to the eIF-2B alpha/beta/delta subunits family. MtnA subfamily.

It is found in the cytoplasm. The protein resides in the nucleus. The catalysed reaction is 5-(methylsulfanyl)-alpha-D-ribose 1-phosphate = 5-(methylsulfanyl)-D-ribulose 1-phosphate. It participates in amino-acid biosynthesis; L-methionine biosynthesis via salvage pathway; L-methionine from S-methyl-5-thio-alpha-D-ribose 1-phosphate: step 1/6. Catalyzes the interconversion of methylthioribose-1-phosphate (MTR-1-P) into methylthioribulose-1-phosphate (MTRu-1-P). The sequence is that of Methylthioribose-1-phosphate isomerase from Cryptococcus neoformans var. neoformans serotype D (strain B-3501A) (Filobasidiella neoformans).